Consider the following 37-residue polypeptide: Large ribosomal subunit protein bL36 (37 aa).

The protein belongs to the bacterial ribosomal protein bL36 family.

This chain is Large ribosomal subunit protein bL36, found in Micrococcus luteus (strain ATCC 4698 / DSM 20030 / JCM 1464 / CCM 169 / CCUG 5858 / IAM 1056 / NBRC 3333 / NCIMB 9278 / NCTC 2665 / VKM Ac-2230) (Micrococcus lysodeikticus).